Here is a 308-residue protein sequence, read N- to C-terminus: Methionyl-tRNA formyltransferase (308 aa).

109–112 (SLLP) provides a ligand contact to (6S)-5,6,7,8-tetrahydrofolate.

Belongs to the Fmt family.

The enzyme catalyses L-methionyl-tRNA(fMet) + (6R)-10-formyltetrahydrofolate = N-formyl-L-methionyl-tRNA(fMet) + (6S)-5,6,7,8-tetrahydrofolate + H(+). Functionally, attaches a formyl group to the free amino group of methionyl-tRNA(fMet). The formyl group appears to play a dual role in the initiator identity of N-formylmethionyl-tRNA by promoting its recognition by IF2 and preventing the misappropriation of this tRNA by the elongation apparatus. In Clostridium beijerinckii (strain ATCC 51743 / NCIMB 8052) (Clostridium acetobutylicum), this protein is Methionyl-tRNA formyltransferase.